The sequence spans 56 residues: 4Fe-4S ferredoxin FdxA (56 aa).

4Fe-4S ferredoxin-type domains are found at residues 1 to 28 (MAYV…SSGD) and 29 to 56 (DRYV…PVQA). [4Fe-4S] cluster is bound by residues Cys-9, Cys-12, Cys-15, Cys-19, Cys-38, Cys-41, Cys-44, and Cys-48.

Requires [4Fe-4S] cluster as cofactor.

Ferredoxins are iron-sulfur proteins that transfer electrons in a wide variety of metabolic reactions. In Gottschalkia acidurici (strain ATCC 7906 / DSM 604 / BCRC 14475 / CIP 104303 / KCTC 5404 / NCIMB 10678 / 9a) (Clostridium acidurici), this protein is 4Fe-4S ferredoxin FdxA.